Consider the following 303-residue polypeptide: tRNA dimethylallyltransferase (303 aa).

16–23 (GPTASGKS) contributes to the ATP binding site. Residue 18–23 (TASGKS) coordinates substrate. The interval 41–44 (DSMQ) is interaction with substrate tRNA. Residues 141–161 (AEALHGELSARDPETAGRVRP) form a disordered region. Positions 165–169 (QRIVR) are interaction with substrate tRNA.

It belongs to the IPP transferase family. As to quaternary structure, monomer. Mg(2+) serves as cofactor.

The enzyme catalyses adenosine(37) in tRNA + dimethylallyl diphosphate = N(6)-dimethylallyladenosine(37) in tRNA + diphosphate. In terms of biological role, catalyzes the transfer of a dimethylallyl group onto the adenine at position 37 in tRNAs that read codons beginning with uridine, leading to the formation of N6-(dimethylallyl)adenosine (i(6)A). The protein is tRNA dimethylallyltransferase of Rhizobium meliloti (strain 1021) (Ensifer meliloti).